We begin with the raw amino-acid sequence, 396 residues long: Chaperone protein DnaJ (396 aa).

Residues 6–71 enclose the J domain; sequence DYYEVLEVTK…DKRSRYDQFG (66 aa). A CR-type zinc finger spans residues 154–236; the sequence is GVEKKFKLKK…CGGDGIVYGE (83 aa). Residues cysteine 167, cysteine 170, cysteine 184, cysteine 187, cysteine 210, cysteine 213, cysteine 224, and cysteine 227 each coordinate Zn(2+). CXXCXGXG motif repeat units lie at residues 167–174, 184–191, 210–217, and 224–231; these read CNHCHGTG, CPTCKGSG, CPTCNGEG, and CKECGGDG.

The protein belongs to the DnaJ family. Homodimer. Requires Zn(2+) as cofactor.

Its subcellular location is the cytoplasm. Its function is as follows. Participates actively in the response to hyperosmotic and heat shock by preventing the aggregation of stress-denatured proteins and by disaggregating proteins, also in an autonomous, DnaK-independent fashion. Unfolded proteins bind initially to DnaJ; upon interaction with the DnaJ-bound protein, DnaK hydrolyzes its bound ATP, resulting in the formation of a stable complex. GrpE releases ADP from DnaK; ATP binding to DnaK triggers the release of the substrate protein, thus completing the reaction cycle. Several rounds of ATP-dependent interactions between DnaJ, DnaK and GrpE are required for fully efficient folding. Also involved, together with DnaK and GrpE, in the DNA replication of plasmids through activation of initiation proteins. The sequence is that of Chaperone protein DnaJ from Bacteroides thetaiotaomicron (strain ATCC 29148 / DSM 2079 / JCM 5827 / CCUG 10774 / NCTC 10582 / VPI-5482 / E50).